The primary structure comprises 235 residues: tRNA pseudouridine synthase B (235 aa).

The Nucleophile role is filled by aspartate 45.

The protein belongs to the pseudouridine synthase TruB family. Type 1 subfamily.

It catalyses the reaction uridine(55) in tRNA = pseudouridine(55) in tRNA. In terms of biological role, responsible for synthesis of pseudouridine from uracil-55 in the psi GC loop of transfer RNAs. This is tRNA pseudouridine synthase B from Chlamydia abortus (strain DSM 27085 / S26/3) (Chlamydophila abortus).